The sequence spans 442 residues: tRNA modification GTPase MnmE (442 aa).

The (6S)-5-formyl-5,6,7,8-tetrahydrofolate site is built by Arg-27, Glu-84, and Lys-124. The region spanning 221 to 366 (GLHVVIVGAP…LLTNLQNFAE (146 aa)) is the TrmE-type G domain. GTP is bound by residues 231–236 (NAGKSS), 250–256 (SEEAGTT), and 275–278 (DTAG). 2 residues coordinate Mg(2+): Ser-235 and Thr-256. Lys-442 contributes to the (6S)-5-formyl-5,6,7,8-tetrahydrofolate binding site.

The protein belongs to the TRAFAC class TrmE-Era-EngA-EngB-Septin-like GTPase superfamily. TrmE GTPase family. Homodimer. Heterotetramer of two MnmE and two MnmG subunits. K(+) is required as a cofactor.

It localises to the cytoplasm. Functionally, exhibits a very high intrinsic GTPase hydrolysis rate. Involved in the addition of a carboxymethylaminomethyl (cmnm) group at the wobble position (U34) of certain tRNAs, forming tRNA-cmnm(5)s(2)U34. This Brucella anthropi (strain ATCC 49188 / DSM 6882 / CCUG 24695 / JCM 21032 / LMG 3331 / NBRC 15819 / NCTC 12168 / Alc 37) (Ochrobactrum anthropi) protein is tRNA modification GTPase MnmE.